A 728-amino-acid polypeptide reads, in one-letter code: MNHSPLKTALAYECFQDQDNSTLALPSDQKMKTGTSGRQRVQEQVMMTVKRQKSKSSQSSTLSHSNRGSMYDGLADNYNNYGTTSRSSYFSKFQAGNGSWGYPIYNGTLKREPDNRRFSSYSQMENWSRHYPRGSCATPGAGSDICFMQKIKASRSEPDLYCDPRGTLRKGTLGSKGHKTTQNRCSFYSTCSGQKAVKKCPVRPPSCTSKQDPVYVPPISCNKDLSFGHSRASSKICSEDIECSGLTIPKAVQYLCSQDEKYQAIGAYYIQHTCFQDESAKQQVYQLGGICKLVDLLRSPNQNVQQAAAGALRNLVFRSTPNKLETRRQNGIREAVSLLRRSGSTEIQKQLTGLLWNLSSTDELKEELVADALPVLTDRVIIPFSGWCDGNSNMSREVVDPEVFFNATGCLRNLSSADAGRQTMRNYSGLIDSLMAYVQNCVAASRCDDKSVENCMCILHNLSYRLDAEVPTRYRQLEYNTRNAYTEKSSTGCFSNRGDKMMNNNYDCPLPEEETNPKGSSWLYHSDAIRTYLNLMGKSKKDATLEACAGALQNLTASKGLMSNGMSQLIGIKEKGLPQIARLLQSGNSDVVRSGASLLSNMSRHPVLHRVMGNQVFPEVTRLLTSHTGNTSNSEDILSSACYTVRNLMTSQPQMAKQYFSNSMLNNVFNLCRNTASSPKAAEAARLLLSDMWASKELQSVLRQQGFDRNMMGNIAGANNLRNFTSRF.

The interval 1–235 (MNHSPLKTAL…SFGHSRASSK (235 aa)) is required for binding to single stranded DNA. Residues 1-287 (MNHSPLKTAL…ESAKQQVYQL (287 aa)) form a required for interaction with EIF4A1 region. Residue S4 is modified to Phosphoserine; by RIPK4. The segment at 48–69 (TVKRQKSKSSQSSTLSHSNRGS) is disordered. Phosphorylation in this region is required for cytoplasmic localization and protein stabilization stretches follow at residues 54–69 (SKSS…NRGS) and 117–192 (RFSS…STCS). At S119 the chain carries Phosphoserine. A Phosphoserine; by RIPK4 modification is found at S120. S122 carries the post-translational modification Phosphoserine. A Phosphoserine; by RIPK4 modification is found at S143. The segment at 161 to 270 (YCDPRGTLRK…KYQAIGAYYI (110 aa)) is required for WNT-mediated nuclear localization. ARM repeat units follow at residues 244–275 (SGLT…HTCF), 276–317 (QDES…NLVF), 318–360 (RSTP…NLSS), 361–412 (TDEL…GCLR), 413–443 (NLSS…NCVA), 505–536 (NYDC…LNLM), 537–583 (GKSK…IARL), 584–629 (LQSG…SHTG), and 630–694 (NTSN…DMWA).

The protein belongs to the beta-catenin family. As to quaternary structure, part of a complex that contains DSG3, PKP1, YAP1 and YWHAG; the complex is required for localization of DSG3 and YAP1 to the cell membrane in keratinocytes. Interacts (via N-terminus) with KRT5/CK5, KRT8/CK8 (via rod domain), KRT15/CK15 and KRT18/CK18 (via rod domain) as part of intermediate filaments. Interacts with VIM (via rod domain). Interacts with DSP. Interacts with DES. Interacts with FXR1; the interaction may facilitate the binding of PKP1 to PKP2, PKP3 and DSP mRNA. Interacts (via N-terminus) with EIF4A1; the interaction promotes EIF4A1 recruitment to the cap-dependent translation complex and EIF4A1 ATPase activity. Interacts with TJP1/ZO-1; the interaction facilitates TJP1/ZO-1 localization to the plasma membrane. Interacts (when phosphorylated) with YWHAG; the interaction results in translocation of PKP1 to the cytoplasm and loss of intercellular adhesion in keratinocytes. In terms of processing, phosphorylated by AKT2; required for interaction with YWHAG and subsequent localization away from desmosomes to the cytoplasm. Phosphorylation of Ser-119 by AKT2 promotes PKP1-driven cap-dependent mRNA translation and decreases intercellular adhesion, phosphorylation is promoted by insulin. Phosphorylation by RIPK4 at the N-terminus is required for its role in differentiation of keratinocytes and DSG1 localization at cell junctions. As to expression, expressed in undifferentiated keratinocytes of the epidermis at birth, expression increases as differentiation proceeds (at protein level). Expressed in the cervical loop during early tooth differentiation, expression is then present between ameloblasts, at ameloblast-ameloblast junctions and in the stratum intermedium during pre-secretory and secretory stages of tooth development (at protein level).

The protein resides in the nucleus. It is found in the cytoplasm. It localises to the perinuclear region. Its subcellular location is the cell junction. The protein localises to the desmosome. The protein resides in the cell membrane. It is found in the stress granule. Its function is as follows. A component of desmosome cell-cell junctions which are required for positive regulation of cellular adhesion. Plays a role in desmosome protein expression regulation and localization to the desmosomal plaque, thereby maintaining cell sheet integrity and anchorage of desmosomes to intermediate filaments. Required for localization of DSG3 and YAP1 to the cell membrane in keratinocytes in response to mechanical strain, via the formation of an interaction complex composed of DSG3, YAP1, PKP1 and YWHAG. Positively regulates differentiation of keratinocytes, potentially via promoting localization of DSG1 at desmosome cell junctions. Required for calcium-independent development and maturation of desmosome plaques specifically at lateral cell-cell contacts in differentiating keratinocytes. Plays a role in the maintenance of DSG3 protein abundance, DSG3 clustering and localization of these clusters to the cell membrane in keratinocytes. May also promote keratinocyte proliferation and morphogenesis during postnatal development. Required for tight junction inside-out transepidermal barrier function of the skin, and is thereby involved in neonatal survival possibly via maintenance of hydration levels. Promotes Wnt-mediated proliferation and differentiation of ameloblasts, via facilitating TJP1/ZO-1 localization to tight junctions. Binds single-stranded DNA (ssDNA), and may thereby play a role in sensing DNA damage and promoting cell survival. Positively regulates cap-dependent translation and as a result cell proliferation, via recruitment of EIF4A1 to the initiation complex and promotion of EIF4A1 ATPase activity. Regulates the mRNA stability and protein abundance of desmosome components PKP2, PKP3, DSC2 and DSP, potentially via its interaction with FXR1. The chain is Plakophilin-1 (Pkp1) from Mus musculus (Mouse).